The following is a 235-amino-acid chain: Small ribosomal subunit protein uS2 (235 aa).

Belongs to the universal ribosomal protein uS2 family.

The sequence is that of Small ribosomal subunit protein uS2 from Geobacillus kaustophilus (strain HTA426).